The following is a 606-amino-acid chain: RUN and FYVE domain-containing protein 2 (606 aa).

The RUN domain occupies 37-169; the sequence is DSDYPPLQQF…IDANLCVKGE (133 aa). Residues 210 to 534 adopt a coiled-coil conformation; it reads EELNRQLNST…IKEANKALQG (325 aa). Residues 540–598 form an FYVE-type zinc finger; the sequence is DKEATHCKLCEKEFSLSKRKHHCRNCGEIFCNACSDNELPLPSSPKPVRVCDSCHALLI. The Zn(2+) site is built by Cys546, Cys549, Cys562, Cys565, Cys570, Cys573, Cys590, and Cys593.

Interacts with BMX. In terms of tissue distribution, expressed in brain, lung and testis.

Its subcellular location is the nucleus. The sequence is that of RUN and FYVE domain-containing protein 2 (RUFY2) from Homo sapiens (Human).